We begin with the raw amino-acid sequence, 96 residues long: ATP synthase subunit f, mitochondrial (96 aa).

The protein belongs to the ATPase F chain family.

It localises to the mitochondrion. The protein resides in the mitochondrion inner membrane. Functionally, mitochondrial membrane ATP synthase (F(1)F(0) ATP synthase or Complex V) produces ATP from ADP in the presence of a proton gradient across the membrane which is generated by electron transport complexes of the respiratory chain. F-type ATPases consist of two structural domains, F(1) - containing the extramembraneous catalytic core and F(0) - containing the membrane proton channel, linked together by a central stalk and a peripheral stalk. During catalysis, ATP synthesis in the catalytic domain of F(1) is coupled via a rotary mechanism of the central stalk subunits to proton translocation. This Schizosaccharomyces pombe (strain 972 / ATCC 24843) (Fission yeast) protein is ATP synthase subunit f, mitochondrial (atp17).